The following is a 92-amino-acid chain: Small ribosomal subunit protein uS19 (92 aa).

This sequence belongs to the universal ribosomal protein uS19 family.

In terms of biological role, protein S19 forms a complex with S13 that binds strongly to the 16S ribosomal RNA. This Bacillus licheniformis (strain ATCC 14580 / DSM 13 / JCM 2505 / CCUG 7422 / NBRC 12200 / NCIMB 9375 / NCTC 10341 / NRRL NRS-1264 / Gibson 46) protein is Small ribosomal subunit protein uS19.